Here is an 872-residue protein sequence, read N- to C-terminus: Probably inactive leucine-rich repeat receptor-like protein kinase At5g06940 (872 aa).

A signal peptide spans 1–26; sequence MATRFKHQFSISLALTFFFFFTKTFS. The Extracellular portion of the chain corresponds to 27 to 540; that stretch reads FTENEELGNL…RSNFHKKGGK (514 aa). Asparagine 55, asparagine 63, and asparagine 86 each carry an N-linked (GlcNAc...) asparagine glycan. 18 LRR repeats span residues 79–98, 99–122, 123–146, 147–169, 171–193, 195–217, 219–243, 244–267, 269–292, 294–316, 317–340, 341–365, 367–389, 391–412, 413–435, 436–459, 460–482, and 484–506; these read SINL…ICDL, PYLT…LSRC, VTLE…ISEF, SSLK…DLGL, FNLQ…AIGK, SELV…SFLG, LDKL…FVGL, TSLR…LGPS, KNLV…ICSG, RLIN…IGEC, LSLE…LWKL, PRIK…SLAS, LEQV…GLVK, LYKF…FCDS, PVLS…LKNC, KKLV…LADL, HVLT…GLQN, and KLAL…LVSG. Asparagine 129 carries an N-linked (GlcNAc...) asparagine glycan. Asparagine 255 carries an N-linked (GlcNAc...) asparagine glycan. An N-linked (GlcNAc...) asparagine glycan is attached at asparagine 297. A glycan (N-linked (GlcNAc...) asparagine) is linked at asparagine 374. Residue asparagine 419 is glycosylated (N-linked (GlcNAc...) asparagine). The N-linked (GlcNAc...) asparagine glycan is linked to asparagine 489. A helical membrane pass occupies residues 541-561; sequence ALVLSLICLALAIATFLAVLY. Residues 562–872 lie on the Cytoplasmic side of the membrane; the sequence is RYSRKKVQFK…ISSSVSPVSA (311 aa). Threonine 585 carries the post-translational modification Phosphothreonine. One can recognise a Protein kinase domain in the interval 589–863; that stretch reads LMKVVNESCP…VKVIKLLEGI (275 aa). Residues 595 to 603 and lysine 617 contribute to the ATP site; that span reads ESCPSGSEV. Phosphotyrosine occurs at positions 662, 699, 754, and 761.

The protein belongs to the protein kinase superfamily. Ser/Thr protein kinase family.

The protein localises to the membrane. This Arabidopsis thaliana (Mouse-ear cress) protein is Probably inactive leucine-rich repeat receptor-like protein kinase At5g06940.